We begin with the raw amino-acid sequence, 722 residues long: Inactive serine protease PAMR1 (722 aa).

The N-terminal stretch at methionine 1 to alanine 21 is a signal peptide. A glycan (N-linked (GlcNAc...) asparagine) is linked at asparagine 98. 8 disulfide bridges follow: cysteine 130–cysteine 152, cysteine 179–cysteine 201, cysteine 241–cysteine 252, cysteine 246–cysteine 262, cysteine 264–cysteine 273, cysteine 282–cysteine 331, cysteine 317–cysteine 344, and cysteine 416–cysteine 444. The CUB domain occupies cysteine 130–valine 238. The EGF-like domain maps to glutamate 237 to glutamate 274. Sushi domains lie at lysine 280–lysine 346 and lysine 393–proline 446. Asparagine 318 is a glycosylation site (N-linked (GlcNAc...) asparagine). A Peptidase S1 domain is found at isoleucine 447 to lysine 722. Residue asparagine 455 is glycosylated (N-linked (GlcNAc...) asparagine). A disulfide bridge connects residues cysteine 491 and cysteine 507. A glycan (N-linked (GlcNAc...) asparagine) is linked at asparagine 616. 2 disulfide bridges follow: cysteine 632-cysteine 651 and cysteine 663-cysteine 699.

Belongs to the peptidase S1 family.

It localises to the secreted. Its function is as follows. May play a role in regeneration of skeletal muscle. In Xenopus tropicalis (Western clawed frog), this protein is Inactive serine protease PAMR1 (pamr1).